The sequence spans 226 residues: Endonuclease NucS (226 aa).

The protein belongs to the NucS endonuclease family.

The protein resides in the cytoplasm. Functionally, cleaves both 3' and 5' ssDNA extremities of branched DNA structures. This Mycobacterium tuberculosis (strain ATCC 25618 / H37Rv) protein is Endonuclease NucS.